Reading from the N-terminus, the 424-residue chain is Glutamate-1-semialdehyde 2,1-aminomutase (424 aa).

K265 is modified (N6-(pyridoxal phosphate)lysine).

This sequence belongs to the class-III pyridoxal-phosphate-dependent aminotransferase family. HemL subfamily. Homodimer. Pyridoxal 5'-phosphate serves as cofactor.

Its subcellular location is the cytoplasm. The enzyme catalyses (S)-4-amino-5-oxopentanoate = 5-aminolevulinate. It functions in the pathway porphyrin-containing compound metabolism; protoporphyrin-IX biosynthesis; 5-aminolevulinate from L-glutamyl-tRNA(Glu): step 2/2. The chain is Glutamate-1-semialdehyde 2,1-aminomutase from Alkaliphilus oremlandii (strain OhILAs) (Clostridium oremlandii (strain OhILAs)).